We begin with the raw amino-acid sequence, 31 residues long: MPIILSYSGFLLAAPIPASAPFTGLNKIRLI.

The helical transmembrane segment at 7-25 threads the bilayer; it reads YSGFLLAAPIPASAPFTGL.

Belongs to the PetL family. In terms of assembly, the 4 large subunits of the cytochrome b6-f complex are cytochrome b6, subunit IV (17 kDa polypeptide, PetD), cytochrome f and the Rieske protein, while the 4 small subunits are PetG, PetL, PetM and PetN. The complex functions as a dimer.

It localises to the plastid. Its subcellular location is the chloroplast thylakoid membrane. In terms of biological role, component of the cytochrome b6-f complex, which mediates electron transfer between photosystem II (PSII) and photosystem I (PSI), cyclic electron flow around PSI, and state transitions. PetL is important for photoautotrophic growth as well as for electron transfer efficiency and stability of the cytochrome b6-f complex. This chain is Cytochrome b6-f complex subunit 6, found in Huperzia lucidula (Shining clubmoss).